We begin with the raw amino-acid sequence, 47 residues long: MAKGKRTFQPNNRRRARVHGFRTRMRTRAGRAIVSARRNKGRKSLTA.

The protein belongs to the bacterial ribosomal protein bL34 family.

This is Large ribosomal subunit protein bL34 from Corynebacterium jeikeium (strain K411).